The following is a 471-amino-acid chain: MNAAGGGSGAQAAGVAAGNISLSHNALLSTASGATTMPMAQLADGWLELESDPGLFTLLLKDFGCHDVQVEEVYDLQKPIESPYGFIFLFRWIEERRARRKIVETTAEIFVKDEEAISSIFFAQQVVPNSCATHALLSVLLNCNENNLQLGDTLSRLKTHTKGMSPENKGLAIGNTPELACAHNSHAMPQARRRLERTGAGVSSCRFTGEAFHFVSFVPINGQLFELDGLKPYPMNHGGWEDSEDWTDKFRRVMAERLGIATGEQDIRFNLMAVVPDRRIAITHKLKMLRTNQAIVSGTLQKLLKADEQGESGNGDSQRPDTPTTLLEPSAFTARDLQSLLKNLDTEIAINEQHLTDENDRRHMFKVDASRRTHNYDKFICTFLSMLAHQGVLGELVSQHLLPSKKVSGQGAANRISKQSNTASAGGSTTGASASTPKTQQQQAAAAKNGKSPSKTPGRRRKGRNKCRKRK.

The UCH catalytic domain maps to 45-276 (GWLELESDPG…IRFNLMAVVP (232 aa)). Cys131 serves as the catalytic Nucleophile. The active-site Proton donor is His213. A disordered region spans residues 307 to 326 (DEQGESGNGDSQRPDTPTTL). Polar residues predominate over residues 314-326 (NGDSQRPDTPTTL). A ULD domain is found at 375–403 (NYDKFICTFLSMLAHQGVLGELVSQHLLP). Residues 405-471 (KKVSGQGAAN…KGRNKCRKRK (67 aa)) are positively charged C-terminal tail required for binding nucleosomes. The tract at residues 412-471 (AANRISKQSNTASAGGSTTGASASTPKTQQQQAAAAKNGKSPSKTPGRRRKGRNKCRKRK) is disordered. A compositionally biased stretch (low complexity) spans 422–447 (TASAGGSTTGASASTPKTQQQQAAAA). Positions 457–471 (PGRRRKGRNKCRKRK) are enriched in basic residues.

It belongs to the peptidase C12 family. BAP1 subfamily. Catalytic component of the polycomb repressive deubiquitinase (PR-DUB) complex, at least composed of caly/calypso, Asx and sba (MBD5/6 homolog). The PR-DUB complex associates with nucleosomes to mediate deubiquitination of histone H2AK118ub1 substrates; the association requires the positively charged C-terminal tail of caly, probably due to direct binding of DNA. Interacts (via ULD domain) with Asx (via DEUBAD domain); the interaction produces a stable heterodimer with a composite binding site for ubiquitin. Homodimerizes (via coiled-coil hinge-region between the UCH and ULD domains) to mediate assembly of 2 copies of the caly-Asx heterodimer into a bisymmetric tetramer; dimerization enhances PR-DUB association with nucleosomes.

It is found in the nucleus. It carries out the reaction Thiol-dependent hydrolysis of ester, thioester, amide, peptide and isopeptide bonds formed by the C-terminal Gly of ubiquitin (a 76-residue protein attached to proteins as an intracellular targeting signal).. Functionally, catalytic component of the polycomb repressive deubiquitinase (PR-DUB) complex, a complex that specifically mediates deubiquitination of histone H2A monoubiquitinated at 'Lys-119' (H2AK118ub1). Mediates bisymmetric organization of the PR-DUB complex and is involved in association with nucleosomes to mediate deubiquitination. Does not deubiquitinate monoubiquitinated histone H2B. Required to maintain the transcriptionally repressive state of homeotic genes throughout development. The PR-DUB complex has weak or no activity toward 'Lys-48'- and 'Lys-63'-linked polyubiquitin chains. Polycomb group (PcG) protein. This Drosophila sechellia (Fruit fly) protein is Ubiquitin carboxyl-terminal hydrolase calypso.